The primary structure comprises 241 residues: Terpene cyclase olcD (241 aa).

Transmembrane regions (helical) follow at residues 19-39, 49-71, 76-95, 108-128, 137-157, 166-186, and 202-222; these read LSDILLVTLASGWLVCYFATI, WMPLLPLSCNVAWELVFITLYPP, ILGFWLLVNLGVIYSALRFA, YLPVLFVLAVGFWAWGHLALI, FYYGGMACQLMTSAAALSGLV, SYTIWLSRVIGTSSALAGLFF, and LMRWLAAAFGILDGVYGVQFW.

It belongs to the paxB family.

It localises to the membrane. It participates in secondary metabolite biosynthesis; terpenoid biosynthesis. Terpene cyclase; part of the gene cluster that mediates the biosynthesis of 15-deoxyoxalicine B. The first step of the pathway is the synthesis of nicotinyl-CoA from nicotinic acid by the nicotinic acid-CoA ligase olcI. Nicotinyl-CoA is then a substrate of polyketide synthase olcA to produce 4-hydroxy-6-(3-pyridinyl)-2H-pyran-2-one (HPPO) which is further prenylated by the polyprenyl transferase olcH to yield geranylgeranyl-HPPO. Geranylgeranyl pyrophosphate is provided by the cluster-specific geranylgeranyl pyrophosphate synthase olcC. The FAD-dependent monooxygenase olcE catalyzes the epoxidation of geranylgeranyl-HPPO and the terpene cyclase olcD catalyzes the cyclization of the terpenoid component, resulting in the formation of the tricyclic terpene moiety seen in predecaturin E. The cytochrome P450 monooxygenase then catalyzes the allylic oxidation of predecaturin E, which is followed by spirocylization with concomitant loss of one molecule of water to form decaturin E. Decaturin E is the substrate of the cytochrome P450 monooxygenase olcJ which hydroxylates it at the C-29 position to form decaturin F. The short-chain dehydrogenase/reductase olcF may catalyze the oxidation of decaturin F to generate the 29-hydroxyl-27-one intermediate, and subsequent hemiacetal formation probably leads to the formation of decaturin C. The dioxygenase olcK may be a peroxisomal enzyme that catalyzes the hydroxylation of decaturin C into decaturin A once decaturin C is shuttled into the peroxisome by the MFS transporter olcL. Finally the cytochrome P450 monooxygenase olcB catalyzes the oxidative rearrangement to yield 15-deoxyoxalicine B. In the absence of olcJ, decaturin E may be shunted to a pathway in which it is oxidized to a ketone, possibly by olcF, to form decaturin D, which undergoes further allylic oxidation to yield decaturin G. Moreover, in the absence of oclK or oclL, oclB can convert decaturin C into 15-deoxyoxalicine A. This Penicillium canescens protein is Terpene cyclase olcD.